We begin with the raw amino-acid sequence, 323 residues long: Sphingolipid delta(4)-desaturase/C4-monooxygenase DES2 (323 aa).

G2 carries N-myristoyl glycine lipidation. 2 consecutive transmembrane segments (helical) span residues 41–61 (PNIK…CWLV) and 68–88 (WLLF…TLAI). Positions 89-93 (HDISH) match the Histidine box-1 motif. The interval 95 to 99 (TAFGT) is required for C4-hydroxylase activity. Residues 128 to 132 (HVDHH) carry the Histidine box-2 motif. Residues 200-220 (IFALWGIKAIVYLLASSLLGL) traverse the membrane as a helical segment. The short motif at 259-263 (HVEHH) is the Histidine box-3 element.

Belongs to the fatty acid desaturase type 1 family. DEGS subfamily.

Its subcellular location is the endoplasmic reticulum membrane. It carries out the reaction a dihydroceramide + 2 Fe(II)-[cytochrome b5] + O2 + 2 H(+) = a phytoceramide + 2 Fe(III)-[cytochrome b5] + H2O. It catalyses the reaction an N-acylsphinganine + 2 Fe(II)-[cytochrome b5] + O2 + 2 H(+) = an N-acylsphing-4-enine + 2 Fe(III)-[cytochrome b5] + 2 H2O. The catalysed reaction is N-octanoylsphinganine + 2 Fe(II)-[cytochrome b5] + O2 + 2 H(+) = N-octanoyl-4-hydroxysphinganine + 2 Fe(III)-[cytochrome b5] + H2O. The enzyme catalyses an N-acylsphinganine + 2 Fe(II)-[cytochrome b5] + O2 + 2 H(+) = an N-acyl-(4R)-4-hydroxysphinganine + 2 Fe(III)-[cytochrome b5] + H2O. It functions in the pathway membrane lipid metabolism; sphingolipid biosynthesis. Functionally, bifunctional enzyme which acts both as a sphingolipid delta(4)-desaturase and a sphingolipid C4-monooxygenase. This chain is Sphingolipid delta(4)-desaturase/C4-monooxygenase DES2, found in Rattus norvegicus (Rat).